The sequence spans 434 residues: Lecithin-cholesterol acyltransferase-like 1 (434 aa).

Serine 191 functions as the Acyl-ester intermediate in the catalytic mechanism. Residues aspartate 354 and histidine 386 each act as charge relay system in the active site.

Belongs to the AB hydrolase superfamily. Lipase family.

In Oryza sativa subsp. japonica (Rice), this protein is Lecithin-cholesterol acyltransferase-like 1.